Consider the following 185-residue polypeptide: Inner membrane lipoprotein DcrB (185 aa).

The signal sequence occupies residues 1 to 19 (MRNLVKYVGIGLLVMGLAA). Cys-20 carries the N-palmitoyl cysteine lipid modification. A lipid anchor (S-diacylglycerol cysteine) is attached at Cys-20.

This sequence belongs to the DcrB family.

The protein resides in the cell membrane. Functionally, plays a role in cell envelope biogenesis, maintenance of cell envelope integrity and membrane homeostasis. Essential for lipoprotein maturation under conditions where membrane fluidity may be altered. The chain is Inner membrane lipoprotein DcrB from Shigella flexneri.